The following is a 251-amino-acid chain: MLTFVGLGLYDAGDISVKGLEAVRASDAVFLEYYTSRLMGTTIEDLVRAYGKEVIVLARADVEQHPEPILDAAAAGDVVVLTGGDPMVSTTHMDLRLRAAARGIPTGIIHGASIQTAVCGLTGLQNYRFGKSCSVPFPQKNWFPLTPYEVVRQNLAADLHTLVYLDIQQDRYMRVGEAIDLLEEMAVRVGGSITTYIGVARAGSVSPVVRAGTADHLRGIDFGGPLHVLIVPATLHPVEQEYLEVFAGLSV.

Residues leucine 9, aspartate 85, valine 88, 113-114, leucine 165, alanine 202, and histidine 227 each bind S-adenosyl-L-methionine; that span reads SI.

It belongs to the diphthine synthase family. As to quaternary structure, homodimer.

The enzyme catalyses 2-[(3S)-amino-3-carboxypropyl]-L-histidyl-[translation elongation factor 2] + 3 S-adenosyl-L-methionine = diphthine-[translation elongation factor 2] + 3 S-adenosyl-L-homocysteine + 3 H(+). Its pathway is protein modification; peptidyl-diphthamide biosynthesis. S-adenosyl-L-methionine-dependent methyltransferase that catalyzes the trimethylation of the amino group of the modified target histidine residue in translation elongation factor 2 (EF-2), to form an intermediate called diphthine. The three successive methylation reactions represent the second step of diphthamide biosynthesis. This is Diphthine synthase from Methanosphaerula palustris (strain ATCC BAA-1556 / DSM 19958 / E1-9c).